Here is a 336-residue protein sequence, read N- to C-terminus: Holliday junction branch migration complex subunit RuvB (336 aa).

Residues 4-184 are large ATPase domain (RuvB-L); that stretch reads ADRLISAASN…FGIVQRLEFY (181 aa). Residues Ile23, Arg24, Gly65, Lys68, Thr69, Thr70, 131 to 133, Arg174, Tyr184, and Arg221 each bind ATP; that span reads EDY. Thr69 provides a ligand contact to Mg(2+). Positions 185-255 are small ATPAse domain (RuvB-S); it reads QVPDLQYIVG…VAAQALDMLN (71 aa). The tract at residues 258–336 is head domain (RuvB-H); it reads AEGFDYMDRK…HFGITPPEMP (79 aa). Positions 294, 313, and 318 each coordinate DNA.

Belongs to the RuvB family. Homohexamer. Forms an RuvA(8)-RuvB(12)-Holliday junction (HJ) complex. HJ DNA is sandwiched between 2 RuvA tetramers; dsDNA enters through RuvA and exits via RuvB. An RuvB hexamer assembles on each DNA strand where it exits the tetramer. Each RuvB hexamer is contacted by two RuvA subunits (via domain III) on 2 adjacent RuvB subunits; this complex drives branch migration. In the full resolvosome a probable DNA-RuvA(4)-RuvB(12)-RuvC(2) complex forms which resolves the HJ.

The protein resides in the cytoplasm. It catalyses the reaction ATP + H2O = ADP + phosphate + H(+). The RuvA-RuvB-RuvC complex processes Holliday junction (HJ) DNA during genetic recombination and DNA repair, while the RuvA-RuvB complex plays an important role in the rescue of blocked DNA replication forks via replication fork reversal (RFR). RuvA specifically binds to HJ cruciform DNA, conferring on it an open structure. The RuvB hexamer acts as an ATP-dependent pump, pulling dsDNA into and through the RuvAB complex. RuvB forms 2 homohexamers on either side of HJ DNA bound by 1 or 2 RuvA tetramers; 4 subunits per hexamer contact DNA at a time. Coordinated motions by a converter formed by DNA-disengaged RuvB subunits stimulates ATP hydrolysis and nucleotide exchange. Immobilization of the converter enables RuvB to convert the ATP-contained energy into a lever motion, pulling 2 nucleotides of DNA out of the RuvA tetramer per ATP hydrolyzed, thus driving DNA branch migration. The RuvB motors rotate together with the DNA substrate, which together with the progressing nucleotide cycle form the mechanistic basis for DNA recombination by continuous HJ branch migration. Branch migration allows RuvC to scan DNA until it finds its consensus sequence, where it cleaves and resolves cruciform DNA. This is Holliday junction branch migration complex subunit RuvB from Enterobacter sp. (strain 638).